The primary structure comprises 81 residues: Antitoxin VapB20 (81 aa).

Its function is as follows. Antitoxin component of a type II toxin-antitoxin (TA) system. Neutralizes the toxic effect of cognate toxin VapC20. This chain is Antitoxin VapB20 (vapB20), found in Mycobacterium tuberculosis (strain CDC 1551 / Oshkosh).